Reading from the N-terminus, the 168-residue chain is Large ribosomal subunit protein uL29c (168 aa).

Positions 1-20 are disordered; sequence MLAIHSLSSTPCSSGLTSPP. The transit peptide at 1–58 directs the protein to the chloroplast; that stretch reads MLAIHSLSSTPCSSGLTSPPKSTLLTKSSFHGLRLPSVNLSSSLRLRVQTPPSSVVVM.

In terms of assembly, component of the chloroplast large ribosomal subunit (LSU). Mature 70S chloroplast ribosomes of higher plants consist of a small (30S) and a large (50S) subunit. The 30S small subunit contains 1 molecule of ribosomal RNA (16S rRNA) and 24 different proteins. The 50S large subunit contains 3 rRNA molecules (23S, 5S and 4.5S rRNA) and 33 different proteins.

It localises to the plastid. The protein localises to the chloroplast. Component of the chloroplast ribosome (chloro-ribosome), a dedicated translation machinery responsible for the synthesis of chloroplast genome-encoded proteins, including proteins of the transcription and translation machinery and components of the photosynthetic apparatus. In Spinacia oleracea (Spinach), this protein is Large ribosomal subunit protein uL29c (RPL29).